The following is a 249-amino-acid chain: 5'-nucleotidase SurE (249 aa).

A divalent metal cation-binding residues include Asp8, Asp9, Ser39, and Asn91.

Belongs to the SurE nucleotidase family. It depends on a divalent metal cation as a cofactor.

The protein localises to the cytoplasm. The catalysed reaction is a ribonucleoside 5'-phosphate + H2O = a ribonucleoside + phosphate. In terms of biological role, nucleotidase that shows phosphatase activity on nucleoside 5'-monophosphates. The sequence is that of 5'-nucleotidase SurE from Pseudomonas fluorescens (strain SBW25).